The following is a 291-amino-acid chain: MIKYSFLLTALVLFLRALKLEAGDIVIYWGQNGNEGSLADTCATNNYAIVNIAFLVVFGNGQNPVLNLAGHCDPNAGACTGLSNDIRACQNQGIKVMLSLGGGAGSYFLSSADDARNVANYLWNNYLGGQSNTRPLGDAVLDGIDFDIEGGTTQHWDELAKTLSQFSQQRKVYLTAAPQCPFPDTWLNGALSTGLFDYVWVQFYNNPPCQYSGGSADNLKNYWNQWNAIQAGKIFLGLPAAQGAAGSGFIPSDVLVSQVLPLINGSPKYGGVMLWSKFYDNGYSSAIKANV.

Residues M1–A22 form the signal peptide. A GH18 domain is found at G23–V291. Intrachain disulfides connect C42-C89 and C72-C79. Residue E149 is the Proton donor of the active site. C180 and C209 are joined by a disulfide.

This sequence belongs to the glycosyl hydrolase 18 family. Chitinase class II subfamily.

The protein localises to the secreted. It is found in the cell wall. The catalysed reaction is Random endo-hydrolysis of N-acetyl-beta-D-glucosaminide (1-&gt;4)-beta-linkages in chitin and chitodextrins.. Its function is as follows. This protein functions as a defense against chitin containing fungal pathogens. In Nicotiana tabacum (Common tobacco), this protein is Acidic endochitinase.